Consider the following 250-residue polypeptide: Ribosomal RNA small subunit methyltransferase J (250 aa).

S-adenosyl-L-methionine is bound by residues 101–102, 117–118, 153–154, and D171; these read RD, ER, and SS.

Belongs to the methyltransferase superfamily. RsmJ family.

It is found in the cytoplasm. The enzyme catalyses guanosine(1516) in 16S rRNA + S-adenosyl-L-methionine = N(2)-methylguanosine(1516) in 16S rRNA + S-adenosyl-L-homocysteine + H(+). In terms of biological role, specifically methylates the guanosine in position 1516 of 16S rRNA. The chain is Ribosomal RNA small subunit methyltransferase J from Cronobacter sakazakii (strain ATCC BAA-894) (Enterobacter sakazakii).